The chain runs to 92 residues: Large ribosomal subunit protein bL25 (92 aa).

Belongs to the bacterial ribosomal protein bL25 family. In terms of assembly, part of the 50S ribosomal subunit; part of the 5S rRNA/L5/L18/L25 subcomplex. Contacts the 5S rRNA. Binds to the 5S rRNA independently of L5 and L18.

In terms of biological role, this is one of the proteins that binds to the 5S RNA in the ribosome where it forms part of the central protuberance. This chain is Large ribosomal subunit protein bL25, found in Vibrio campbellii (strain ATCC BAA-1116).